The following is a 130-amino-acid chain: Small ribosomal subunit protein bS18 (130 aa).

2 stretches are compositionally biased toward basic and acidic residues: residues 98–108 (KKMEESVKSAE) and 117–130 (EESK…AKTE). A disordered region spans residues 98-130 (KKMEESVKSAEPKATAEATEESKPKRTRKAKTE).

Belongs to the bacterial ribosomal protein bS18 family. As to quaternary structure, part of the 30S ribosomal subunit. Forms a tight heterodimer with protein bS6.

Its function is as follows. Binds as a heterodimer with protein bS6 to the central domain of the 16S rRNA, where it helps stabilize the platform of the 30S subunit. The protein is Small ribosomal subunit protein bS18 of Metamycoplasma arthritidis (strain 158L3-1) (Mycoplasma arthritidis).